Here is a 101-residue protein sequence, read N- to C-terminus: MNKSKRLFPKSKRSFRRRLPPIQSGDRIDYRNMSLISRFISEQGKILSRRVNRVTLKQQRLITIAIKQARILSLLPFINNQKQFERSESTPRTTSLRTRKK.

The protein belongs to the bacterial ribosomal protein bS18 family. As to quaternary structure, part of the 30S ribosomal subunit.

The protein localises to the plastid. Its subcellular location is the chloroplast. In Aethionema cordifolium (Lebanon stonecress), this protein is Small ribosomal subunit protein bS18c.